The chain runs to 419 residues: Tyrosine--tRNA ligase (419 aa).

Tyr34 lines the L-tyrosine pocket. Positions 39 to 48 match the 'HIGH' region motif; it reads PTADSLHLGH. Tyr169 and Gln173 together coordinate L-tyrosine. The 'KMSKS' region signature appears at 229–233; it reads KFGKS. Position 232 (Lys232) interacts with ATP. The S4 RNA-binding domain maps to 352-419; sequence LNIIDLLVTS…KKKYFVLNFK (68 aa).

The protein belongs to the class-I aminoacyl-tRNA synthetase family. TyrS type 1 subfamily. In terms of assembly, homodimer.

The protein resides in the cytoplasm. The enzyme catalyses tRNA(Tyr) + L-tyrosine + ATP = L-tyrosyl-tRNA(Tyr) + AMP + diphosphate + H(+). Catalyzes the attachment of tyrosine to tRNA(Tyr) in a two-step reaction: tyrosine is first activated by ATP to form Tyr-AMP and then transferred to the acceptor end of tRNA(Tyr). In Streptococcus agalactiae serotype V (strain ATCC BAA-611 / 2603 V/R), this protein is Tyrosine--tRNA ligase.